The primary structure comprises 199 residues: Thioredoxin peroxidase (199 aa).

The 160-residue stretch at 6-165 (AKLNHPAPHF…TLRLVKAFQF (160 aa)) folds into the Thioredoxin domain. Catalysis depends on C52, which acts as the Cysteine sulfenic acid (-SOH) intermediate. The tract at residues 179 to 199 (PGSKTMKADPNGSQDYFSSMN) is disordered. Polar residues predominate over residues 189-199 (NGSQDYFSSMN).

It belongs to the peroxiredoxin family. AhpC/Prx1 subfamily. In terms of assembly, homodimer; disulfide-linked, upon oxidation.

The enzyme catalyses a hydroperoxide + [thioredoxin]-dithiol = an alcohol + [thioredoxin]-disulfide + H2O. In terms of biological role, thiol-specific peroxidase that catalyzes the reduction of hydrogen peroxide and organic hydroperoxides to water and alcohols, respectively. Plays a role in cell protection against oxidative stress by detoxifying peroxides and as sensor of hydrogen peroxide-mediated signaling events. This chain is Thioredoxin peroxidase, found in Trypanosoma brucei rhodesiense.